The sequence spans 234 residues: Ribose-5-phosphate isomerase A (234 aa).

Substrate-binding positions include 28 to 31, 85 to 88, and 98 to 101; these read TGST, DGAD, and KGLG. The active-site Proton acceptor is Glu-107. Lys-125 contacts substrate.

The protein belongs to the ribose 5-phosphate isomerase family. In terms of assembly, homodimer.

It catalyses the reaction aldehydo-D-ribose 5-phosphate = D-ribulose 5-phosphate. It participates in carbohydrate degradation; pentose phosphate pathway; D-ribose 5-phosphate from D-ribulose 5-phosphate (non-oxidative stage): step 1/1. Catalyzes the reversible conversion of ribose-5-phosphate to ribulose 5-phosphate. The protein is Ribose-5-phosphate isomerase A of Roseiflexus castenholzii (strain DSM 13941 / HLO8).